Consider the following 124-residue polypeptide: UPF0102 protein Msil_0293 (124 aa).

This sequence belongs to the UPF0102 family.

The protein is UPF0102 protein Msil_0293 of Methylocella silvestris (strain DSM 15510 / CIP 108128 / LMG 27833 / NCIMB 13906 / BL2).